Consider the following 638-residue polypeptide: Chaperone protein DnaK (638 aa).

T196 carries the phosphothreonine; by autocatalysis modification. Residues 592-638 (ASNLYQQPGAEAGAAPQPETNGQQESKGGDGAVNAEYEVIDGDDDKK) are disordered. The span at 597–610 (QQPGAEAGAAPQPE) shows a compositional bias: low complexity. Residues 629 to 638 (EVIDGDDDKK) are compositionally biased toward acidic residues.

Belongs to the heat shock protein 70 family.

Acts as a chaperone. The protein is Chaperone protein DnaK of Chlorobaculum parvum (strain DSM 263 / NCIMB 8327) (Chlorobium vibrioforme subsp. thiosulfatophilum).